We begin with the raw amino-acid sequence, 208 residues long: Protein-L-isoaspartate O-methyltransferase (208 aa).

Residue Ser59 is part of the active site.

This sequence belongs to the methyltransferase superfamily. L-isoaspartyl/D-aspartyl protein methyltransferase family.

The protein resides in the cytoplasm. It catalyses the reaction [protein]-L-isoaspartate + S-adenosyl-L-methionine = [protein]-L-isoaspartate alpha-methyl ester + S-adenosyl-L-homocysteine. Its function is as follows. Catalyzes the methyl esterification of L-isoaspartyl residues in peptides and proteins that result from spontaneous decomposition of normal L-aspartyl and L-asparaginyl residues. It plays a role in the repair and/or degradation of damaged proteins. The protein is Protein-L-isoaspartate O-methyltransferase of Vibrio campbellii (strain ATCC BAA-1116).